A 431-amino-acid polypeptide reads, in one-letter code: Enolase (431 aa).

Glutamine 167 provides a ligand contact to (2R)-2-phosphoglycerate. The active-site Proton donor is the glutamate 209. Residues aspartate 246, glutamate 290, and aspartate 317 each contribute to the Mg(2+) site. (2R)-2-phosphoglycerate is bound by residues lysine 342, arginine 371, serine 372, and lysine 393. The active-site Proton acceptor is the lysine 342.

This sequence belongs to the enolase family. As to quaternary structure, component of the RNA degradosome, a multiprotein complex involved in RNA processing and mRNA degradation. It depends on Mg(2+) as a cofactor.

The protein resides in the cytoplasm. Its subcellular location is the secreted. It localises to the cell surface. It carries out the reaction (2R)-2-phosphoglycerate = phosphoenolpyruvate + H2O. It functions in the pathway carbohydrate degradation; glycolysis; pyruvate from D-glyceraldehyde 3-phosphate: step 4/5. In terms of biological role, catalyzes the reversible conversion of 2-phosphoglycerate (2-PG) into phosphoenolpyruvate (PEP). It is essential for the degradation of carbohydrates via glycolysis. The protein is Enolase of Yersinia pseudotuberculosis serotype O:1b (strain IP 31758).